The chain runs to 473 residues: Photosystem II CP43 reaction center protein (473 aa).

The propeptide occupies 1–14 (MKILYSLRRFYHVE). Threonine 15 is subject to N-acetylthreonine. Residue threonine 15 is modified to Phosphothreonine. 5 helical membrane-spanning segments follow: residues 69–93 (LFEVAHFVPEKPMYEQGLILLPHLA), 134–155 (LLGPETLEESFPFFGYVWKDRN), 178–200 (KALYFGGVYDTWAPGGGDVRKIT), 255–275 (KPFAWARRAFVWSGEAYLSYS), and 291–312 (WFNNTAYPSEFYGPTGPEASQA). Glutamate 367 contacts [CaMn4O5] cluster. The helical transmembrane segment at 447 to 471 (RARAAAAGFEKGIDRDLEPVLFMTP) threads the bilayer.

It belongs to the PsbB/PsbC family. PsbC subfamily. As to quaternary structure, PSII is composed of 1 copy each of membrane proteins PsbA, PsbB, PsbC, PsbD, PsbE, PsbF, PsbH, PsbI, PsbJ, PsbK, PsbL, PsbM, PsbT, PsbX, PsbY, PsbZ, Psb30/Ycf12, at least 3 peripheral proteins of the oxygen-evolving complex and a large number of cofactors. It forms dimeric complexes. The cofactor is Binds multiple chlorophylls and provides some of the ligands for the Ca-4Mn-5O cluster of the oxygen-evolving complex. It may also provide a ligand for a Cl- that is required for oxygen evolution. PSII binds additional chlorophylls, carotenoids and specific lipids..

Its subcellular location is the plastid. It localises to the chloroplast thylakoid membrane. Its function is as follows. One of the components of the core complex of photosystem II (PSII). It binds chlorophyll and helps catalyze the primary light-induced photochemical processes of PSII. PSII is a light-driven water:plastoquinone oxidoreductase, using light energy to abstract electrons from H(2)O, generating O(2) and a proton gradient subsequently used for ATP formation. The polypeptide is Photosystem II CP43 reaction center protein (Lemna minor (Common duckweed)).